We begin with the raw amino-acid sequence, 191 residues long: LOB domain-containing protein 19 (191 aa).

The LOB domain maps to 15–117; the sequence is GPCGACKFLR…AELAHVQARL (103 aa).

Belongs to the LOB domain-containing protein family. Expressed in shoots, roots and floral tissues, but not in stems or leaves.

This chain is LOB domain-containing protein 19 (LBD19), found in Arabidopsis thaliana (Mouse-ear cress).